The sequence spans 1427 residues: Coiled-coil domain-containing protein 144A (1427 aa).

A compositionally biased stretch (basic and acidic residues) spans 1–11 (MASWGGEKRGG). 5 disordered regions span residues 1 to 32 (MASWGGEKRGGAEGSPKPAVYATRKTPSVGSQ), 87 to 189 (AARS…LTER), 213 to 261 (LPEN…CDRE), 453 to 485 (NMNQNSDSGSTNNYKSLKPKLENLSSLPPDSDR), and 528 to 586 (EEEM…EVKN). Polar residues-rich tracts occupy residues 129-150 (PESLPQNNNPDWHPTNLTLSDE) and 167-178 (VSPSMPENQSAT). Over residues 224–234 (QDSELTSEEEQ) the composition is skewed to acidic residues. Residues 453-467 (NMNQNSDSGSTNNYK) show a composition bias toward polar residues. A coiled-coil region spans residues 490-545 (YLHEELQQDMQKFKNEVNTLEEEFLALKKEDVQLHKDVEEEMEKHRSNSTELSGTL). Over residues 528 to 537 (EEEMEKHRSN) the composition is skewed to basic and acidic residues. Residues 543–552 (GTLTDGTTVG) are compositionally biased toward low complexity. Residues 563-584 (PRKENGEHDRPADKTSNEKNEV) show a composition bias toward basic and acidic residues. Coiled coils occupy residues 648–1129 (LLKL…DLTE) and 1155–1309 (FSMK…TQLT).

The protein belongs to the CCDC144 family.

Functionally, may play a role in preventing the formation of kidney stones through inhibition of calcium oxalate monohydrate (COM) crystallization, attenuating COM-induced apoptotic injury to renal epithelial cells. May exhibit antilithiatic (preventing the formation of kidney stones) activity through crystal binding, hindering the crystal attachment to renal epithelial cells, a pre-requisite to initiate inflammatory response. The polypeptide is Coiled-coil domain-containing protein 144A (CCDC144A) (Homo sapiens (Human)).